The following is a 130-amino-acid chain: Small ribosomal subunit protein uS8z/uS8w (130 aa).

The protein belongs to the universal ribosomal protein uS8 family.

It is found in the cytoplasm. In Arabidopsis thaliana (Mouse-ear cress), this protein is Small ribosomal subunit protein uS8z/uS8w (RPS15AA).